Here is a 1781-residue protein sequence, read N- to C-terminus: Signal-induced proliferation-associated 1-like protein 3 (1781 aa).

Disordered stretches follow at residues 45–166 (SMSQ…FLPL) and 239–332 (TELL…EASR). Positions 54–73 (PATATATATATTRPSPTTPA) are enriched in low complexity. Residues 87–97 (PPKREALREHS) are compositionally biased toward basic and acidic residues. At serine 100 the chain carries Phosphoserine. Polar residues predominate over residues 118 to 135 (RSIQNGQPPTSTPASSGS). Basic residues predominate over residues 137 to 146 (AFHRLSRRRS). Phosphoserine is present on serine 146. Serine 401 is subject to Phosphoserine. Positions 611–828 (LLKLDEQGLC…RTRQEYLKDL (218 aa)) constitute a Rap-GAP domain. The PDZ domain maps to 966–1042 (DMTLRRNGLG…VKVVIIPPFE (77 aa)). Disordered stretches follow at residues 1046 to 1112 (PRRG…SLSR), 1124 to 1221 (ESQP…QKPE), 1236 to 1565 (AGSS…GLEP), and 1583 to 1636 (TLPA…RLDP). Composition is skewed to polar residues over residues 1080-1111 (APWQWSGPASHNSLPASKWATPTTPGHAQSLS) and 1157-1166 (PSGSFSTPGS). Residues 1196–1210 (DGTSSGDSSSGGLTS) are compositionally biased toward low complexity. The segment covering 1245–1261 (SRQDAAGKDSPNRHSKG) has biased composition (basic and acidic residues). Residues 1266-1281 (SSHSSSNTLSSNASSS) show a composition bias toward low complexity. Polar residues predominate over residues 1304–1322 (GGSSDSGIDTTLYTSSPSC). Serine 1364 is subject to Phosphoserine. Phosphothreonine is present on threonine 1387. Residues 1425–1441 (RPSQLAQPSPFQLSASV) are compositionally biased toward polar residues. Lysine 1448 is modified (N6-acetyllysine). The span at 1509–1518 (TIEDDLKKLI) shows a compositional bias: basic and acidic residues. The segment covering 1532-1547 (GQSPQKGLQRTLSDES) has biased composition (polar residues). A phosphoserine mark is found at serine 1544 and serine 1547. Residues 1599–1609 (PGATPAAGSGF) show a composition bias toward low complexity. Residues serine 1619 and serine 1622 each carry the phosphoserine modification. Basic and acidic residues predominate over residues 1625–1635 (DGRDRPLRRLD). Position 1677 is a phosphoserine (serine 1677). Residues 1685–1712 (SPVHSHLSLERGPPTPRTTPTMSEEPPL) are disordered. 2 positions are modified to phosphothreonine: threonine 1699 and threonine 1703. The stretch at 1720–1774 (QLEVMLKQLHTDLQKEKQDKVVLQSEVASLRQNNQRLQEESQAASEQLRKFAEIF) forms a coiled coil.

It is found in the apical cell membrane. Its function is as follows. Plays a critical role in epithelial cell morphogenesis, polarity, adhesion and cytoskeletal organization in the lens. The polypeptide is Signal-induced proliferation-associated 1-like protein 3 (SIPA1L3) (Homo sapiens (Human)).